The sequence spans 230 residues: CRP-like protein Clp (230 aa).

18–139 (PSLALDAGTI…APKILYAIGV (122 aa)) lines the a nucleoside 3',5'-cyclic phosphate pocket. The region spanning 158-230 (LDVTDRIVRT…GKTVVLYGTR (73 aa)) is the HTH crp-type domain. The segment at residues 190–209 (RQELARLVGCSREMAGRVLK) is a DNA-binding region (H-T-H motif).

As to quaternary structure, homodimer.

It is found in the cytoplasm. Allosterically inhibited by cyclic di-GMP (c-di-GMP), which binds to Clp and abolishes its ability to bind its target gene promoter. Functionally, global transcriptional regulator that regulates virulence factors production by activating or repressing the expression of a large set of genes in diffusible signal factor (DSF) pathway. The protein is CRP-like protein Clp (clp) of Xanthomonas axonopodis pv. citri (strain 306).